A 190-amino-acid chain; its full sequence is GTP cyclohydrolase 1 (190 aa).

3 residues coordinate Zn(2+): Cys75, His78, and Cys146.

Belongs to the GTP cyclohydrolase I family. Homomer.

It catalyses the reaction GTP + H2O = 7,8-dihydroneopterin 3'-triphosphate + formate + H(+). Its pathway is cofactor biosynthesis; 7,8-dihydroneopterin triphosphate biosynthesis; 7,8-dihydroneopterin triphosphate from GTP: step 1/1. The protein is GTP cyclohydrolase 1 of Campylobacter concisus (strain 13826).